The following is a 284-amino-acid chain: Shikimate dehydrogenase (NADP(+)) (284 aa).

Shikimate contacts are provided by residues 23 to 25 (SLS) and threonine 70. Residue lysine 74 is the Proton acceptor of the active site. Glutamate 86 serves as a coordination point for NADP(+). The shikimate site is built by asparagine 95 and aspartate 111. Residues 135-139 (GAGGA), 159-164 (NRTPGR), and alanine 227 contribute to the NADP(+) site. Tyrosine 229 lines the shikimate pocket. Glycine 251 provides a ligand contact to NADP(+).

This sequence belongs to the shikimate dehydrogenase family. Homodimer.

The enzyme catalyses shikimate + NADP(+) = 3-dehydroshikimate + NADPH + H(+). It functions in the pathway metabolic intermediate biosynthesis; chorismate biosynthesis; chorismate from D-erythrose 4-phosphate and phosphoenolpyruvate: step 4/7. Involved in the biosynthesis of the chorismate, which leads to the biosynthesis of aromatic amino acids. Catalyzes the reversible NADPH linked reduction of 3-dehydroshikimate (DHSA) to yield shikimate (SA). This chain is Shikimate dehydrogenase (NADP(+)), found in Rubrobacter xylanophilus (strain DSM 9941 / JCM 11954 / NBRC 16129 / PRD-1).